Consider the following 149-residue polypeptide: 3-dehydroquinate dehydratase (149 aa).

The active-site Proton acceptor is the Tyr26. Residues Asn77, His83, and Asp90 each coordinate substrate. Catalysis depends on His103, which acts as the Proton donor. Substrate is bound by residues 104–105 (LS) and Arg114.

Belongs to the type-II 3-dehydroquinase family. In terms of assembly, homododecamer.

It catalyses the reaction 3-dehydroquinate = 3-dehydroshikimate + H2O. It participates in metabolic intermediate biosynthesis; chorismate biosynthesis; chorismate from D-erythrose 4-phosphate and phosphoenolpyruvate: step 3/7. Catalyzes a trans-dehydration via an enolate intermediate. This Haemophilus influenzae (strain PittEE) protein is 3-dehydroquinate dehydratase.